Reading from the N-terminus, the 340-residue chain is Dihydroorotate dehydrogenase (quinone) (340 aa).

Residues Ala65–Lys69 and Thr89 each bind FMN. A substrate-binding site is contributed by Lys69. Asn114–Phe118 lines the substrate pocket. The FMN site is built by Asn142 and Asn175. Asn175 serves as a coordination point for substrate. The active-site Nucleophile is Ser178. Substrate is bound at residue Asn180. The FMN site is built by Lys220 and Thr248. Asn249–Thr250 contacts substrate. FMN-binding positions include Gly271, Gly300, and Tyr321 to Ser322.

This sequence belongs to the dihydroorotate dehydrogenase family. Type 2 subfamily. Monomer. The cofactor is FMN.

The protein resides in the cell membrane. The enzyme catalyses (S)-dihydroorotate + a quinone = orotate + a quinol. It functions in the pathway pyrimidine metabolism; UMP biosynthesis via de novo pathway; orotate from (S)-dihydroorotate (quinone route): step 1/1. In terms of biological role, catalyzes the conversion of dihydroorotate to orotate with quinone as electron acceptor. This Actinobacillus succinogenes (strain ATCC 55618 / DSM 22257 / CCUG 43843 / 130Z) protein is Dihydroorotate dehydrogenase (quinone).